Here is a 685-residue protein sequence, read N- to C-terminus: Protein OCTOPUS (685 aa).

Disordered regions lie at residues 1–34, 152–202, and 280–314; these read MNPA…CNRH, RNLP…DYVE, and KWRQ…RQLR. Over residues 179–202 the composition is skewed to acidic residues; that stretch reads VNDEGEAESDDEELEEEEEEDYVE. Residues 280–291 are compositionally biased toward basic residues; it reads KWRQNQKMKKRR. A compositionally biased stretch (basic and acidic residues) spans 292 to 314; sequence NGGDHRPGSARLPVEKPIGRQLR. Position 318 is a phosphoserine (Ser318). The tract at residues 419–471 is disordered; the sequence is VEEPAPPPPVVNQTNGVSDPVIIPGGSIQTRDYYTDSSSRRRKSLDRSSSSMR. Residues 549-578 are a coiled coil; it reads LIYRKSVNKYEEEEEEEEDRYRRLNGGMVE. A disordered region spans residues 584 to 640; it reads SWPELRNGGGGGGGPRMVRSNSNVSWRSSGGGSARKVNGLDRRNKSSRYSPKNGENG. Residues 601–611 are compositionally biased toward low complexity; that stretch reads VRSNSNVSWRS.

This sequence belongs to the OCTOPUS family. As to quaternary structure, interacts with VCC. Phosphorylation at Ser-318 amplifies the promotion of protophloem differentiation. In terms of tissue distribution, expressed in provascular cells and phloem initials (e.g. protophloem, metaphloem, sieve element precursor cells and sieve element procambium precursor cells).

It is found in the cell membrane. It localises to the cytoplasm. Functionally, potentiates primary root protophloem differentiation. Required, together with VCC, for embryo provasculature development and cotyledon vascular complexity and connectivity. Regulates roots architecture. Mediates the recruitment of ASK7/BIN2 to the plasma membrane. This chain is Protein OCTOPUS, found in Arabidopsis thaliana (Mouse-ear cress).